Reading from the N-terminus, the 511-residue chain is BAR/IMD domain-containing adapter protein 2-like 1 (511 aa).

Residues 1–249 enclose the IMD domain; the sequence is MSRGPEEVNR…MNMIEEIKTP (249 aa). Residues 115 to 154 are a coiled coil; that stretch reads MNATLKRYQTEHKNKLESLEKSQAELKKIRRKSQGSRNAL. Phosphothreonine is present on residues Thr-248 and Thr-257. Phosphoserine occurs at positions 261 and 281. The interval 302-328 is disordered; that stretch reads NNPATAAPNSQRVNNSTGTSEDPSLQR. Residues 303 to 328 are compositionally biased toward polar residues; sequence NPATAAPNSQRVNNSTGTSEDPSLQR. Ser-331 and Ser-354 each carry phosphoserine. The SH3 domain occupies 339–402; sequence MKKQKVKTIF…PSSYTKLLEE (64 aa). Thr-412 bears the Phosphothreonine mark. 3 positions are modified to phosphoserine: Ser-414, Ser-420, and Ser-422. The tract at residues 451 to 511 is disordered; it reads RRADSARTTS…TNDRSAPIIR (61 aa). The segment at 483–511 is binds F-actin; sequence PPFLSGENPFATVKLRPTVTNDRSAPIIR.

Interacts with RAC1. Binds to F-actin. Interacts with FASLG. Interacts (via SH3 domain) with E.coli effector protein EspF(U) (via PXXP motifs). Identified in a complex containing at least WASL, BAIAP2L1 and E.coli EspF(U). Interacts with E.coli intimin receptor Tir. In terms of processing, phosphorylated on tyrosine in response to insulin.

It localises to the cytoplasm. Its subcellular location is the cytoskeleton. Functionally, may function as adapter protein. Involved in the formation of clusters of actin bundles. Plays a role in the reorganization of the actin cytoskeleton in response to bacterial infection. This is BAR/IMD domain-containing adapter protein 2-like 1 (BAIAP2L1) from Homo sapiens (Human).